Reading from the N-terminus, the 302-residue chain is Dermonecrotic toxin LiSicTox-alphaIA1bii (302 aa).

Positions 1–14 (ARVVLGCWSVLSQA) are cleaved as a signal peptide. Positions 15–22 (AQTDDEER) are excised as a propeptide. Residue histidine 34 is part of the active site. Residues glutamate 54 and aspartate 56 each coordinate Mg(2+). Histidine 70 acts as the Nucleophile in catalysis. Disulfide bonds link cysteine 74-cysteine 80 and cysteine 76-cysteine 219. Mg(2+) is bound at residue aspartate 114.

It belongs to the arthropod phospholipase D family. Class II subfamily. Class IIa sub-subfamily. It depends on Mg(2+) as a cofactor. As to expression, expressed by the venom gland.

It is found in the secreted. It carries out the reaction an N-(acyl)-sphingosylphosphocholine = an N-(acyl)-sphingosyl-1,3-cyclic phosphate + choline. The enzyme catalyses an N-(acyl)-sphingosylphosphoethanolamine = an N-(acyl)-sphingosyl-1,3-cyclic phosphate + ethanolamine. It catalyses the reaction a 1-acyl-sn-glycero-3-phosphocholine = a 1-acyl-sn-glycero-2,3-cyclic phosphate + choline. The catalysed reaction is a 1-acyl-sn-glycero-3-phosphoethanolamine = a 1-acyl-sn-glycero-2,3-cyclic phosphate + ethanolamine. Dermonecrotic toxins cleave the phosphodiester linkage between the phosphate and headgroup of certain phospholipids (sphingolipid and lysolipid substrates), forming an alcohol (often choline) and a cyclic phosphate. This toxin acts on sphingomyelin (SM). It may also act on ceramide phosphoethanolamine (CPE), lysophosphatidylcholine (LPC) and lysophosphatidylethanolamine (LPE), but not on lysophosphatidylserine (LPS), and lysophosphatidylglycerol (LPG). It acts by transphosphatidylation, releasing exclusively cyclic phosphate products as second products. Induces hemolysis, dermonecrosis, vascular permeability and platelet aggregation. The protein is Dermonecrotic toxin LiSicTox-alphaIA1bii of Loxosceles intermedia (Brown spider).